A 158-amino-acid chain; its full sequence is Transcription elongation factor GreA (158 aa).

Positions 46–66 (AEYEAAKERQGFIEGRISELE) form a coiled coil.

It belongs to the GreA/GreB family.

In terms of biological role, necessary for efficient RNA polymerase transcription elongation past template-encoded arresting sites. The arresting sites in DNA have the property of trapping a certain fraction of elongating RNA polymerases that pass through, resulting in locked ternary complexes. Cleavage of the nascent transcript by cleavage factors such as GreA or GreB allows the resumption of elongation from the new 3'terminus. GreA releases sequences of 2 to 3 nucleotides. This is Transcription elongation factor GreA from Neisseria meningitidis serogroup A / serotype 4A (strain DSM 15465 / Z2491).